The following is a 496-amino-acid chain: Transmembrane protein 104 (496 aa).

Residues 1–10 (MAGEITETGE) are Cytoplasmic-facing. A helical membrane pass occupies residues 11–31 (LYSPYVGLVYMFNLIVGTGAL). At 32–36 (TMPKA) the chain is on the extracellular side. Residues 37 to 57 (FATAGWLVSLVLLVFVGFMSF) traverse the membrane as a helical segment. Over 58–146 (VTTTFAMEAM…SMFFNKVGVN (89 aa)) the chain is Cytoplasmic. A disordered region spans residues 81–100 (THKEEDDEDSSTASDSDLLS). Over residues 91–100 (STASDSDLLS) the composition is skewed to low complexity. A helical transmembrane segment spans residues 147-167 (LFYFCIITYLYGDLAIYAAAV). Over 168–204 (PVSLMQVTCSVSGNDSCGVDTDARYNDTDLCWGPLRR) the chain is Extracellular. N-linked (GlcNAc...) asparagine glycosylation occurs at asparagine 193. The helical transmembrane segment at 205–225 (VDVYRIYLAIFTVLLGPFTFF) threads the bilayer. The Cytoplasmic portion of the chain corresponds to 226-233 (DVQKTKYL). Residues 234–254 (QILTSMMRWIAFAIMIVLALV) form a helical membrane-spanning segment. The Extracellular segment spans residues 255–265 (RIGKGQGEGHP). A helical membrane pass occupies residues 266–286 (PLANFLGVQNLFGVCVYSFMC). Topologically, residues 287-306 (QHSLPSLITPISSKRHITRL) are cytoplasmic. The helical transmembrane segment at 307-327 (LFLDYALILAFYGLLSFTAIF) threads the bilayer. At 328–354 (CFRGDSLMDMYTLNFARCDVVGLAAVR) the chain is on the extracellular side. A helical transmembrane segment spans residues 355–375 (FFLGLFPVFTISTNFPIIAVT). Residues 376–397 (LRNNWKTLFHREGGTYPWVVDR) lie on the Cytoplasmic side of the membrane. A helical transmembrane segment spans residues 398–418 (VVFPTITLVPPILVAFCTHDL). The Extracellular portion of the chain corresponds to 419 to 421 (ESL). A helical membrane pass occupies residues 422 to 442 (VAITGAYAGTGIQYVIPAFLV). Residues 443 to 470 (YLCRKDTQLTFGYGTVNKHRSPFRHTFW) lie on the Cytoplasmic side of the membrane. A helical membrane pass occupies residues 471-491 (VAFVLLWAFSCFFFVTAYIVL). Residues 492–496 (KETQL) are Extracellular-facing.

The protein belongs to the TMEM104 family.

The protein resides in the membrane. The protein is Transmembrane protein 104 (Tmem104) of Mus musculus (Mouse).